Here is a 267-residue protein sequence, read N- to C-terminus: Proteasome assembly chaperone 2 (267 aa).

This sequence belongs to the PSMG2 family. Component of the 20S proteasome chaperone. Forms a heterodimer with PBA1 that binds to proteasome precursors.

It is found in the cytoplasm. Involved in 20S proteasome assembly. Required for maximal proteasome activity. Affects the chymotrypsin-like activity of the proteasome. Can be degraded by the proteasome. Involved in the endoplasmic reticulum-associated degradation (ERAD). This Saccharomyces cerevisiae (strain ATCC 204508 / S288c) (Baker's yeast) protein is Proteasome assembly chaperone 2 (ADD66).